We begin with the raw amino-acid sequence, 235 residues long: Sugar fermentation stimulation protein homolog (235 aa).

It belongs to the SfsA family.

The protein is Sugar fermentation stimulation protein homolog of Pseudomonas aeruginosa (strain LESB58).